A 360-amino-acid polypeptide reads, in one-letter code: Photosystem II protein D1 1 (360 aa).

The Cytoplasmic portion of the chain corresponds to 2 to 31; sequence TTTLQRRESANLWERFCNWVTSTDNRLYVG. The helical transmembrane segment at 32–53 threads the bilayer; the sequence is WFGVIMIPTLLAATICFVIAFI. Topologically, residues 54-110 are lumenal; the sequence is AAPPVDIDGIREPVSGSLLYGNNIITGAVVPSSNAIGLHFYPIWEAASLDEWLYNGG. The chain crosses the membrane as a helical span at residues 111–132; the sequence is PYQLIIFHFLLGASCYMGRQWE. His118 is a binding site for chlorophyll a. Residues Tyr126 and Gln130 each coordinate pheophytin a. The Cytoplasmic portion of the chain corresponds to 133–142; it reads LSYRLGMRPW. The helical transmembrane segment at 143–163 threads the bilayer; the sequence is ICVAYSAPLASAFAVFLIYPI. Tyr147 is a binding site for pheophytin a. Residues 164–191 lie on the Lumenal side of the membrane; it reads GQGSFSDGMPLGISGTFNFMIVFQAEHN. Positions 170 and 189 each coordinate [CaMn4O5] cluster. Residues 192–217 form a helical membrane-spanning segment; sequence ILMHPFHQLGVAGVFGGALFCAMHGS. His198 lines the chlorophyll a pocket. A quinone is bound by residues His215 and 264-265; that span reads SF. Residue His215 participates in Fe cation binding. Residues 218–272 lie on the Cytoplasmic side of the membrane; the sequence is LVTSSLIRETTETESANYGYKFGQEEETYNIVAAHGYFGRLIFQYASFNNSRSLH. His272 serves as a coordination point for Fe cation. A helical membrane pass occupies residues 273 to 295; the sequence is FFLAAWPVVGVWFTALGISTMAF. Topologically, residues 296–344 are lumenal; it reads NLNGFNFNHSVIDAKGNVINTWADIINRANLGMEVMHERNAHNFPLDLA. Positions 332, 333, 342, and 344 each coordinate [CaMn4O5] cluster. Positions 345–360 are excised as a propeptide; that stretch reads SAESAPVAMIAPSING.

The protein belongs to the reaction center PufL/M/PsbA/D family. PSII is composed of 1 copy each of membrane proteins PsbA, PsbB, PsbC, PsbD, PsbE, PsbF, PsbH, PsbI, PsbJ, PsbK, PsbL, PsbM, PsbT, PsbX, PsbY, PsbZ, Psb30/Ycf12, peripheral proteins PsbO, CyanoQ (PsbQ), PsbU, PsbV and a large number of cofactors. It forms dimeric complexes. Precursor protein interacts with Ycf48. Part of a photosystem II (PSII) assembly intermediate complex PSII-I; crystallized from a strain deleted of psbJ, it forms monomeric PSII before addition of the oxygen evolving complex. PSII-I includes 3 assembly factors not found in mature PSII (Psb27, Psb28 and Psb34). In PSII-I the C-terminus of D1 (this subunit) is already processed but not yet found at its final position. It depends on The D1/D2 heterodimer binds P680, chlorophylls that are the primary electron donor of PSII, and subsequent electron acceptors. It shares a non-heme iron and each subunit binds pheophytin, quinone, additional chlorophylls, carotenoids and lipids. D1 provides most of the ligands for the Mn4-Ca-O5 cluster of the oxygen-evolving complex (OEC). There is also a Cl(-1) ion associated with D1 and D2, which is required for oxygen evolution. PSII binds additional chlorophylls, carotenoids and specific lipids. as a cofactor. C-terminally processed by CtpA; processing is essential to allow assembly of the oxygen-evolving complex and thus photosynthetic growth. In terms of processing, tyr-161 forms a radical intermediate that is referred to as redox-active TyrZ, YZ or Y-Z.

Its subcellular location is the cellular thylakoid membrane. It catalyses the reaction 2 a plastoquinone + 4 hnu + 2 H2O = 2 a plastoquinol + O2. Photosystem II (PSII) is a light-driven water:plastoquinone oxidoreductase that uses light energy to abstract electrons from H(2)O, generating O(2) and a proton gradient subsequently used for ATP formation. It consists of a core antenna complex that captures photons, and an electron transfer chain that converts photonic excitation into a charge separation. The D1/D2 (PsbA/PsbD) reaction center heterodimer binds P680, the primary electron donor of PSII as well as several subsequent electron acceptors. This Thermosynechococcus vestitus (strain NIES-2133 / IAM M-273 / BP-1) protein is Photosystem II protein D1 1.